Consider the following 69-residue polypeptide: Amphipathic peptide StCT2 (69 aa).

The signal sequence occupies residues M1–A23. I37 carries the post-translational modification Isoleucine amide. Positions S41–D69 are excised as a propeptide.

Belongs to the non-disulfide-bridged peptide (NDBP) superfamily. Short antimicrobial peptide (group 4) family. As to expression, expressed by the venom gland.

It is found in the secreted. The protein resides in the target cell membrane. In terms of biological role, antimicrobial peptide that is rapidly bactericidal against Gram-positive bacteria. The polypeptide is Amphipathic peptide StCT2 (Scorpiops tibetanus (Scorpion)).